A 294-amino-acid chain; its full sequence is Cell division protein ZipA (294 aa).

Residue Met1 is a topological domain, periplasmic. The chain crosses the membrane as a helical span at residues 2–22 (EIGLREWLILIGIIVIAGILF). Residues 23–294 (DGWRRMRGGK…FERRALTQKR (272 aa)) lie on the Cytoplasmic side of the membrane. The disordered stretch occupies residues 47 to 107 (PDEEGSAEVL…GKRAAEMQPQ (61 aa)). Basic and acidic residues predominate over residues 82 to 91 (AREREREQKP).

This sequence belongs to the ZipA family. In terms of assembly, interacts with FtsZ via their C-terminal domains.

The protein resides in the cell inner membrane. In terms of biological role, essential cell division protein that stabilizes the FtsZ protofilaments by cross-linking them and that serves as a cytoplasmic membrane anchor for the Z ring. Also required for the recruitment to the septal ring of downstream cell division proteins. This Pseudomonas putida (strain W619) protein is Cell division protein ZipA.